The chain runs to 271 residues: 5-deoxy-glucuronate isomerase (271 aa).

Belongs to the isomerase IolB family.

It catalyses the reaction 5-deoxy-D-glucuronate = 5-dehydro-2-deoxy-D-gluconate. It functions in the pathway polyol metabolism; myo-inositol degradation into acetyl-CoA; acetyl-CoA from myo-inositol: step 4/7. Involved in the isomerization of 5-deoxy-glucuronate (5DG) to 5-dehydro-2-deoxy-D-gluconate (DKG or 2-deoxy-5-keto-D-gluconate). The polypeptide is 5-deoxy-glucuronate isomerase (Lacticaseibacillus casei (Lactobacillus casei)).